We begin with the raw amino-acid sequence, 109 residues long: Thiosulfate sulfurtransferase GlpE (109 aa).

Residues 17 to 105 form the Rhodanese domain; that stretch reads AQGQALLLDI…WQRAYPEEVA (89 aa). C65 (cysteine persulfide intermediate) is an active-site residue.

This sequence belongs to the GlpE family.

It is found in the cytoplasm. It carries out the reaction thiosulfate + hydrogen cyanide = thiocyanate + sulfite + 2 H(+). The enzyme catalyses thiosulfate + [thioredoxin]-dithiol = [thioredoxin]-disulfide + hydrogen sulfide + sulfite + 2 H(+). Transferase that catalyzes the transfer of sulfur from thiosulfate to thiophilic acceptors such as cyanide or dithiols. May function in a CysM-independent thiosulfate assimilation pathway by catalyzing the conversion of thiosulfate to sulfite, which can then be used for L-cysteine biosynthesis. This is Thiosulfate sulfurtransferase GlpE from Edwardsiella ictaluri (strain 93-146).